We begin with the raw amino-acid sequence, 444 residues long: MGKNKTAYVCQECGYKSVKWLGKCPSCGEWNTLVEEFEPQSFSLVKKEPSLVLPVTDWEKEEHERETTGFESLDNALGGGLVKGQVILIAGEPGIGKSTLLLQISDRVANGKKVLYVSGEESGTQIALRAKRLGINNENLLVYPEVNLEKILQTLEKEKPSLLVLDSVQTIFSERLESSAGSVSQVREVTYRITEFCKEKNVPAFIVGQITKEGSIAGPKVLEHIVDTVLQFEGERFNFYRIVKVIKNRFGSTGEIAVFKMTDKGLEEVPEPSAFFISEKANAPGSVVFPHTEGSKPVLLEVQALVIPALYTTPQRRTQGFDPNRLALILAVLEKEAKIFTRDQDVFVNVAGGMSVKEPAADLAVAMAVVSSKKEKEVPKDFVIFGEVGLSGEIRAVHFGDLRLKEAKRFGFKKALIPKSLEIEIDGMEIYPVSHIQEAIEVLF.

The segment at 10 to 27 (CQECGYKSVKWLGKCPSC) adopts a C4-type zinc-finger fold. 91-98 (GEPGIGKS) is a binding site for ATP. The RadA KNRFG motif signature appears at 247 to 251 (KNRFG). A lon-protease-like region spans residues 345–444 (DVFVNVAGGM…HIQEAIEVLF (100 aa)).

It belongs to the RecA family. RadA subfamily.

Functionally, DNA-dependent ATPase involved in processing of recombination intermediates, plays a role in repairing DNA breaks. Stimulates the branch migration of RecA-mediated strand transfer reactions, allowing the 3' invading strand to extend heteroduplex DNA faster. Binds ssDNA in the presence of ADP but not other nucleotides, has ATPase activity that is stimulated by ssDNA and various branched DNA structures, but inhibited by SSB. Does not have RecA's homology-searching function. The protein is DNA repair protein RadA of Aquifex aeolicus (strain VF5).